The chain runs to 427 residues: Dihydroorotase (427 aa).

Positions 57 and 59 each coordinate Zn(2+). Substrate-binding positions include 59–61 (HLR) and Asn91. Zn(2+) is bound by residues Asp149, His176, and His229. Position 275 (Asn275) interacts with substrate. Asp302 serves as a coordination point for Zn(2+). Asp302 is a catalytic residue. Substrate is bound by residues His306 and 320–321 (FG).

The protein belongs to the metallo-dependent hydrolases superfamily. DHOase family. Class I DHOase subfamily. Requires Zn(2+) as cofactor.

The enzyme catalyses (S)-dihydroorotate + H2O = N-carbamoyl-L-aspartate + H(+). The protein operates within pyrimidine metabolism; UMP biosynthesis via de novo pathway; (S)-dihydroorotate from bicarbonate: step 3/3. Functionally, catalyzes the reversible cyclization of carbamoyl aspartate to dihydroorotate. The sequence is that of Dihydroorotase from Shouchella clausii (strain KSM-K16) (Alkalihalobacillus clausii).